The chain runs to 391 residues: Multidrug resistance protein MdtL (391 aa).

12 helical membrane passes run 4–24, 42–62, 69–89, 93–113, 131–151, 158–178, 203–222, 245–265, 269–289, 293–313, 331–351, and 356–376; these read FLICSFALVLLYPAGIDMYLV, IAFSVYLAGMAAAMLFAGKVA, PVAIPGAALFIIASVFCSLAE, LFLAGRFLQGLGAGCCYVVAF, LLNGITCIIPVLAPVLGHLIM, SLFWTMATMGIALLMLSLFIL, FFLSRVVITTLSVSVILTFV, ALTAGVSMTVSFSTPFALGIF, TLMITSQVLFLAAGITLAVSP, VSLFGITLICAGFSVGFGVAM, LGIAQVCGSSLWIWLAAVVGI, and MLIGILIACSIVSLLLIMFVA.

This sequence belongs to the major facilitator superfamily. DHA1 family. MdtL (TC 2.A.1.2.22) subfamily.

It localises to the cell inner membrane. In terms of biological role, confers resistance to chloramphenicol. The sequence is that of Multidrug resistance protein MdtL from Escherichia coli O45:K1 (strain S88 / ExPEC).